The chain runs to 916 residues: DNA mismatch repair protein MutS (916 aa).

Residues 1–47 (MSEALSVPAAEGENTVTASESPDLAATSARAEKVGKQEKPEKAEKQS) form a disordered region. A compositionally biased stretch (basic and acidic residues) spans 30–45 (RAEKVGKQEKPEKAEK). 656–663 (GPNMGGKS) serves as a coordination point for ATP. Over residues 843–861 (ADATPTPQMDLFSAQSSPS) the composition is skewed to polar residues. The tract at residues 843–880 (ADATPTPQMDLFSAQSSPSADDEDDKSAGQSAVPPAQA) is disordered.

Belongs to the DNA mismatch repair MutS family.

This protein is involved in the repair of mismatches in DNA. It is possible that it carries out the mismatch recognition step. This protein has a weak ATPase activity. The sequence is that of DNA mismatch repair protein MutS from Cupriavidus metallidurans (strain ATCC 43123 / DSM 2839 / NBRC 102507 / CH34) (Ralstonia metallidurans).